Reading from the N-terminus, the 149-residue chain is Large ribosomal subunit protein uL15 (149 aa).

Composition is skewed to basic residues over residues 1–13 and 21–42; these read MPTR…KHRG and RIGK…HHHR. The disordered stretch occupies residues 1-44; the sequence is MPTRLTKTRKHRGNVSAGKGRIGKHRKHPGGRGKAGGQHHHRTN.

Belongs to the universal ribosomal protein uL15 family. As to quaternary structure, component of the large ribosomal subunit. Mature ribosomes consist of a small (40S) and a large (60S) subunit. The 40S subunit contains about 32 different proteins and 1 molecule of RNA (18S). The 60S subunit contains 45 different proteins and 3 molecules of RNA (25S, 5.8S and 5S).

It localises to the cytoplasm. In terms of biological role, component of the ribosome, a large ribonucleoprotein complex responsible for the synthesis of proteins in the cell. The small ribosomal subunit (SSU) binds messenger RNAs (mRNAs) and translates the encoded message by selecting cognate aminoacyl-transfer RNA (tRNA) molecules. The large subunit (LSU) contains the ribosomal catalytic site termed the peptidyl transferase center (PTC), which catalyzes the formation of peptide bonds, thereby polymerizing the amino acids delivered by tRNAs into a polypeptide chain. The nascent polypeptides leave the ribosome through a tunnel in the LSU and interact with protein factors that function in enzymatic processing, targeting, and the membrane insertion of nascent chains at the exit of the ribosomal tunnel. The sequence is that of Large ribosomal subunit protein uL15 from Candida albicans (strain SC5314 / ATCC MYA-2876) (Yeast).